The primary structure comprises 454 residues: Putative F-box/LRR-repeat protein At3g58880 (454 aa).

Residues V2–D48 form the F-box domain. LRR repeat units follow at residues L77–N102, S144–S168, V169–N194, I214–A240, L270–P301, T303–S327, and S328–G353.

The protein is Putative F-box/LRR-repeat protein At3g58880 of Arabidopsis thaliana (Mouse-ear cress).